The sequence spans 202 residues: uncharacterized protein (202 aa).

The protein resides in the mitochondrion. This is an uncharacterized protein from Schizosaccharomyces pombe (strain 972 / ATCC 24843) (Fission yeast).